The following is a 463-amino-acid chain: MRSRSRSRSRQRERRRSDSRARSRSERRTYQKPQHRRSVSRERKRERDRELHRERTSNRSSRRSREKDAVPRRRRTRSSPSRSSSSSSSDRSSSSRSPSRSRKSRPKSVERWPNDRYHENNDRRQNPFRGRAPEGSFINDPAEPSFRSQHRGRGSSNHQFKGDSKAVNARRNQRVLIGEEGVPEVWGKSPSRPETDDVELVKGSYIGPKKKKKKGKRKHKKSEKKSKKKSKKSKKKKSKQESSSSSSSSSSEDSSDESSSSSSSSSSDSEDESEEEDVWLEKTADGIKKPKKKKSSTSKKDKKSKKKKKKRKSEAEKSKKSSSSSASKSKNKESASHNDEDVGPSLRPGGSLNQKDFGKALLPGEGAAMAAYIAEGKRIPRRGEIGLTSDEIANFESVGYVMSGSRHRRMEAVRIRKENQLYSADEKRALAMFSKEERQKRENKILSQFKDMIHSKLQAKDKK.

The segment covering 1–14 (MRSRSRSRSRQRER) has biased composition (basic residues). The segment at 1–358 (MRSRSRSRSR…GGSLNQKDFG (358 aa)) is disordered. Composition is skewed to basic and acidic residues over residues 15-29 (RRSD…ERRT) and 39-71 (VSRE…DAVP). A compositionally biased stretch (low complexity) spans 78–98 (SSPSRSSSSSSSDRSSSSRSP). A compositionally biased stretch (basic and acidic residues) spans 107-125 (KSVERWPNDRYHENNDRRQ). Ser136, Ser189, and Ser191 each carry phosphoserine. Thr195 bears the Phosphothreonine mark. Residues 208–238 (PKKKKKKGKRKHKKSEKKSKKKSKKSKKKKS) show a composition bias toward basic residues. A compositionally biased stretch (low complexity) spans 241–267 (ESSSSSSSSSSEDSSDESSSSSSSSSS). Residues 268-278 (DSEDESEEEDV) show a composition bias toward acidic residues. The span at 279-288 (WLEKTADGIK) shows a compositional bias: basic and acidic residues. Over residues 289–312 (KPKKKKSSTSKKDKKSKKKKKKRK) the composition is skewed to basic residues. Residues 330-340 (KNKESASHNDE) show a composition bias toward basic and acidic residues.

Belongs to the NKAP family.

The protein resides in the nucleus. Tumor suppressor involved in maintaining genome integrity. Influences gene expression and mRNA splicing. The protein is NF-kappa-B-activating protein of Drosophila melanogaster (Fruit fly).